We begin with the raw amino-acid sequence, 427 residues long: Serine--tRNA ligase (427 aa).

231–233 (TAE) provides a ligand contact to L-serine. 262-264 (RSE) is an ATP binding site. Position 285 (Glu285) interacts with L-serine. 349-352 (EISS) contacts ATP. Ser385 contributes to the L-serine binding site.

Belongs to the class-II aminoacyl-tRNA synthetase family. Type-1 seryl-tRNA synthetase subfamily. In terms of assembly, homodimer. The tRNA molecule binds across the dimer.

The protein resides in the cytoplasm. The enzyme catalyses tRNA(Ser) + L-serine + ATP = L-seryl-tRNA(Ser) + AMP + diphosphate + H(+). It carries out the reaction tRNA(Sec) + L-serine + ATP = L-seryl-tRNA(Sec) + AMP + diphosphate + H(+). Its pathway is aminoacyl-tRNA biosynthesis; selenocysteinyl-tRNA(Sec) biosynthesis; L-seryl-tRNA(Sec) from L-serine and tRNA(Sec): step 1/1. In terms of biological role, catalyzes the attachment of serine to tRNA(Ser). Is also able to aminoacylate tRNA(Sec) with serine, to form the misacylated tRNA L-seryl-tRNA(Sec), which will be further converted into selenocysteinyl-tRNA(Sec). This chain is Serine--tRNA ligase, found in Exiguobacterium sp. (strain ATCC BAA-1283 / AT1b).